A 455-amino-acid polypeptide reads, in one-letter code: DNA N(6)-methyladenine demethylase ALKBH1C (455 aa).

Disordered stretches follow at residues Met-1–Asn-114 and Ser-173–Ser-194. One can recognise a Fe2OG dioxygenase domain in the interval Leu-345 to Tyr-455. Position 352–354 (Asn-352–Tyr-354) interacts with 2-oxoglutarate. Positions 363, 365, and 423 each coordinate Fe cation. Arg-447–Arg-453 is a binding site for 2-oxoglutarate.

This sequence belongs to the alkB family. Fe(2+) serves as cofactor. In terms of tissue distribution, expressed at low levels in roots and seedlings, but barely in cauline leaves, rosette leaves, stems, siliques and flowers.

Its subcellular location is the nucleus. It localises to the cytoplasm. The catalysed reaction is an N(6)-methyl-2'-deoxyadenosine in DNA + 2-oxoglutarate + O2 = a 2'-deoxyadenosine in DNA + formaldehyde + succinate + CO2. Its function is as follows. Dioxygenase that catalyzes DNA N(6)-methyladenine (6 mA) demethylation with a low efficiency. In Arabidopsis thaliana (Mouse-ear cress), this protein is DNA N(6)-methyladenine demethylase ALKBH1C.